We begin with the raw amino-acid sequence, 678 residues long: ERAD-associated E3 ubiquitin-protein ligase component HRD3A (678 aa).

The N-terminal stretch at 1–25 (MRILSYGIVILSLLVFSFIEFGVHA) is a signal peptide. The disordered stretch occupies residues 40–71 (GGDDNGVGESSDFDEFGESEPKSEEELDPGSW). 8 Sel1-like repeats span residues 124–159 (PHAQ…AGGN), 242–277 (ANAM…VDKG), 279–313 (PRSM…AKEG), 317–349 (AFNG…AVDN), 353–386 (SGHY…ANAG), 388–422 (PKAF…AERG), 506–537 (AALL…AKSQ), and 540–568 (AQAM…RYYD). N-linked (GlcNAc...) asparagine glycosylation is found at asparagine 298 and asparagine 335. Residues 620–640 (VVFEEGNATILTLFVCLITIL) form a helical membrane-spanning segment.

It belongs to the sel-1 family. Interacts with OS9.

It localises to the endoplasmic reticulum membrane. Component of the endoplasmic reticulum (ER) quality control system called ER-associated degradation (ERAD) and involved in ubiquitin-dependent degradation of misfolded endoplasmic reticulum proteins. Functions as an ERAD substrate-recruiting factor that recognizes misfolded proteins for the HRD1 E3 ubiquitin ligase complex. Targets the misfolded LRR receptor kinase BRI1. The protein is ERAD-associated E3 ubiquitin-protein ligase component HRD3A of Arabidopsis thaliana (Mouse-ear cress).